Consider the following 557-residue polypeptide: DNA 3'-5' helicase XPB (557 aa).

The tract at residues 1–135 is required for protein stability or solubility; it reads MTDGPLIVQS…APLLGTRIAP (135 aa). Residues 190–344 form the Helicase ATP-binding domain; sequence VDNFWNGGSG…DVFSLIGPKR (155 aa). An ATP-binding site is contributed by 203–210; it reads LPCGAGKT. The DEAH box motif lies at 298–301; the sequence is DEVH. A Helicase C-terminal domain is found at 398-544; it reads RVVEKLVAQH…AYRIVDADDI (147 aa).

Belongs to the helicase family. RAD25/XPB subfamily. In terms of assembly, monomer. It depends on Mn(2+) as a cofactor. The cofactor is Mg(2+). Ca(2+) serves as cofactor.

The enzyme catalyses Couples ATP hydrolysis with the unwinding of duplex DNA by translocating in the 3'-5' direction.. It catalyses the reaction ATP + H2O = ADP + phosphate + H(+). In terms of biological role, ATP-dependent 3'-5' DNA helicase, unwinds 3'-overhangs, 3'- flaps, and splayed-arm DNA substrates but not 5'-overhangs or 5'-flap substrates. Requires ATP hydrolysis for activity; the ATPase activity is DNA-dependent and requires a minimum of 4 single-stranded nucleotides (nt) with 6-10 nt providing all necessary interactions for full processive unwinding. The ATPase prefers ATP over CTP or GTP, is almost inactive with TTP. This Kineococcus radiotolerans (strain ATCC BAA-149 / DSM 14245 / SRS30216) protein is DNA 3'-5' helicase XPB.